We begin with the raw amino-acid sequence, 556 residues long: Phenylalanine--tRNA ligase beta subunit (556 aa).

One can recognise a B5 domain in the interval 274 to 349 (HEPEEMEVDL…ITLGLNKIGY (76 aa)). 4 residues coordinate Mg(2+): D327, D333, E336, and E337.

Belongs to the phenylalanyl-tRNA synthetase beta subunit family. Type 2 subfamily. In terms of assembly, tetramer of two alpha and two beta subunits. Mg(2+) is required as a cofactor.

It is found in the cytoplasm. The catalysed reaction is tRNA(Phe) + L-phenylalanine + ATP = L-phenylalanyl-tRNA(Phe) + AMP + diphosphate + H(+). This Korarchaeum cryptofilum (strain OPF8) protein is Phenylalanine--tRNA ligase beta subunit.